Reading from the N-terminus, the 509-residue chain is Maturase K (509 aa).

It belongs to the intron maturase 2 family. MatK subfamily.

The protein localises to the plastid. It is found in the chloroplast. Usually encoded in the trnK tRNA gene intron. Probably assists in splicing its own and other chloroplast group II introns. This chain is Maturase K, found in Nicotiana alata (Winged tobacco).